The primary structure comprises 430 residues: MANVVVVGSQWGDEGKGKIVDWLSEQADVVVRFQGGHNAGHTLVVDGVTYKLSLLPSGVVRPGKLSVIGNGVVLDPQALVDELARLESQGVHVGPDRLRIAENTPLILPLHRELDALRENASEGTRIGTTKRGIGPAYEDKVGRRAIRLVDLVDPKALPAKVERLLTHHNLIRRGLGVEEVNPQALVDELLALAPKVLPYMDRVWELLDKARKDGKKILFEGAQGALLDIDHGTYPYVTSSNTVASSAAGGSGVGPGALDYVLGITKAYTTRVGEGPFPTELTDEVGKTLGTKGREFGVVTGRPRRCGWFDAVLVRQTVRTCGIHGIALTKLDVLDGFDEIKVCVGYKLDGKEIDYFPSEMGAQARVEPIYETIEGWTDSTAGARSWADLPAEAVKYVRWLEELIGCPVAVLSTSPERNDTILVHNPFQA.

GTP contacts are provided by residues 12–18 and 40–42; these read GDEGKGK and GHT. Residue Asp13 is the Proton acceptor of the active site. Asp13 and Gly40 together coordinate Mg(2+). Residues 13–16, 38–41, Thr130, Arg144, Gln224, Thr239, and Arg303 each bind IMP; these read DEGK and NAGH. Residue His41 is the Proton donor of the active site. Residue 299 to 305 participates in substrate binding; that stretch reads VVTGRPR. GTP-binding positions include Arg305, 331-333, and 413-415; these read KLD and STS.

This sequence belongs to the adenylosuccinate synthetase family. As to quaternary structure, homodimer. The cofactor is Mg(2+).

The protein resides in the cytoplasm. It carries out the reaction IMP + L-aspartate + GTP = N(6)-(1,2-dicarboxyethyl)-AMP + GDP + phosphate + 2 H(+). It participates in purine metabolism; AMP biosynthesis via de novo pathway; AMP from IMP: step 1/2. In terms of biological role, plays an important role in the de novo pathway of purine nucleotide biosynthesis. Catalyzes the first committed step in the biosynthesis of AMP from IMP. In Azorhizobium caulinodans (strain ATCC 43989 / DSM 5975 / JCM 20966 / LMG 6465 / NBRC 14845 / NCIMB 13405 / ORS 571), this protein is Adenylosuccinate synthetase.